Reading from the N-terminus, the 242-residue chain is Proteasome subunit beta type-4 (242 aa).

Positions 1 to 23 (ESVARGTAPGELHCFPGAGPVRH) are excised as a propeptide. The active-site Nucleophile is Thr24.

The protein belongs to the peptidase T1B family. The 26S proteasome consists of a 20S proteasome core and two 19S regulatory subunits. The 20S proteasome core is composed of 28 subunits that are arranged in four stacked rings, resulting in a barrel-shaped structure. The two end rings are each formed by seven alpha subunits, and the two central rings are each formed by seven beta subunits. The catalytic chamber with the active sites is on the inside of the barrel.

Its subcellular location is the cytoplasm. The protein resides in the nucleus. Non-catalytic component of the proteasome, a multicatalytic proteinase complex which is characterized by its ability to cleave peptides with Arg, Phe, Tyr, Leu, and Glu adjacent to the leaving group at neutral or slightly basic pH. The proteasome has an ATP-dependent proteolytic activity. The polypeptide is Proteasome subunit beta type-4 (psmb4) (Xenopus laevis (African clawed frog)).